The following is a 228-amino-acid chain: Ribonuclease HII (228 aa).

The 189-residue stretch at 26 to 214 (RAVAGVDEVG…VRAHSRFPLD (189 aa)) folds into the RNase H type-2 domain. Residues D32, E33, and D124 each coordinate a divalent metal cation.

It belongs to the RNase HII family. Mn(2+) is required as a cofactor. The cofactor is Mg(2+).

The protein localises to the cytoplasm. The enzyme catalyses Endonucleolytic cleavage to 5'-phosphomonoester.. Its function is as follows. Endonuclease that specifically degrades the RNA of RNA-DNA hybrids. The protein is Ribonuclease HII of Solibacter usitatus (strain Ellin6076).